The sequence spans 233 residues: Orotidine 5'-phosphate decarboxylase (233 aa).

Substrate is bound by residues aspartate 13, lysine 35, 62 to 71 (DLKFHDIPNT), threonine 122, arginine 182, glutamine 191, glycine 211, and arginine 212. Lysine 64 serves as the catalytic Proton donor.

This sequence belongs to the OMP decarboxylase family. Type 1 subfamily. As to quaternary structure, homodimer.

The catalysed reaction is orotidine 5'-phosphate + H(+) = UMP + CO2. It participates in pyrimidine metabolism; UMP biosynthesis via de novo pathway; UMP from orotate: step 2/2. Functionally, catalyzes the decarboxylation of orotidine 5'-monophosphate (OMP) to uridine 5'-monophosphate (UMP). This is Orotidine 5'-phosphate decarboxylase from Pseudomonas fluorescens (strain ATCC BAA-477 / NRRL B-23932 / Pf-5).